The primary structure comprises 443 residues: MTHIQLDYGKTLEFFGEHELQQQKDIVKSIHNTIHKGTGAGSDFLGWIDLPVDYDKEEFSRILEASKRVKDNSEVFVVIGIGGSYLGARAAIEMLTSSFRNSDEYPEIVFVGNHLSSTYTQELIDYLDGKDFSVNVISKSGTTTEPAVSFRLFKQLLENKYGKEEAKKRIFATTDKEKGALKQLATNEGYETFVVPDDIGGRYSVLTAVGLLPIAVAGIDIKAMMEGAAKAREELSSENLEDNIAYQYATIRNVLYAKGYDTEMLINYEPSMQYFNEWWKQLFGESEGKDYKGIYPSSANYTTDLHSLGQYVQEGRRFLFETVVKVNNPKHDITIEEDSDNLDGLNYLAGKTIDEVNTKAFEGTLLAHTDGGVPNIVLNIPRLDEETFGYVVYFFELACSMSGYQLGVNPFNQPGVEAYKQNMFALLGKQGFEDKKEALEKRL.

Residue Glu285 is the Proton donor of the active site. Catalysis depends on residues His306 and Lys420.

Belongs to the GPI family.

It localises to the cytoplasm. The enzyme catalyses alpha-D-glucose 6-phosphate = beta-D-fructose 6-phosphate. It participates in carbohydrate biosynthesis; gluconeogenesis. Its pathway is carbohydrate degradation; glycolysis; D-glyceraldehyde 3-phosphate and glycerone phosphate from D-glucose: step 2/4. In terms of biological role, catalyzes the reversible isomerization of glucose-6-phosphate to fructose-6-phosphate. The sequence is that of Glucose-6-phosphate isomerase from Staphylococcus saprophyticus subsp. saprophyticus (strain ATCC 15305 / DSM 20229 / NCIMB 8711 / NCTC 7292 / S-41).